Here is a 1400-residue protein sequence, read N- to C-terminus: DNA-directed RNA polymerase subunit beta' (1400 aa).

Zn(2+)-binding residues include C71, C73, C86, and C89. 3 residues coordinate Mg(2+): D462, D464, and D466. Residues C811, C885, C892, and C895 each contribute to the Zn(2+) site.

Belongs to the RNA polymerase beta' chain family. In terms of assembly, the RNAP catalytic core consists of 2 alpha, 1 beta, 1 beta' and 1 omega subunit. When a sigma factor is associated with the core the holoenzyme is formed, which can initiate transcription. The cofactor is Mg(2+). It depends on Zn(2+) as a cofactor.

It catalyses the reaction RNA(n) + a ribonucleoside 5'-triphosphate = RNA(n+1) + diphosphate. In terms of biological role, DNA-dependent RNA polymerase catalyzes the transcription of DNA into RNA using the four ribonucleoside triphosphates as substrates. This chain is DNA-directed RNA polymerase subunit beta', found in Brucella melitensis biotype 1 (strain ATCC 23456 / CCUG 17765 / NCTC 10094 / 16M).